The chain runs to 646 residues: Epithelial sodium channel subunit beta-2 (646 aa).

The Cytoplasmic portion of the chain corresponds to M1–M57. A helical membrane pass occupies residues W58 to L78. Over T79–G551 the chain is Extracellular. Cystine bridges form between C104/C290, C214/C221, C267/C274, C380/C467, C405/C463, C409/C459, C418/C445, and C420/C434. A helical membrane pass occupies residues S552–L572. The Cytoplasmic portion of the chain corresponds to K573–N646. The interval Q586–N646 is disordered. The span at Q610 to E619 shows a compositional bias: basic and acidic residues.

It belongs to the amiloride-sensitive sodium channel (TC 1.A.6) family. SCNN1B subfamily. As to quaternary structure, component of the heterotrimeric epithelial sodium channel (ENaC) composed of an alpha/SCNN1A, a beta/SCNN1B and a gamma/SCNN1G subunit.

Its subcellular location is the apical cell membrane. The protein resides in the cytoplasmic vesicle membrane. The catalysed reaction is Na(+)(in) = Na(+)(out). Its activity is regulated as follows. Originally identified and characterized by its inhibition by the diuretic drug amiloride. In terms of biological role, this is one of the three pore-forming subunits of the heterotrimeric epithelial sodium channel (ENaC), a critical regulator of sodium balance and fluid homeostasis. ENaC operates in epithelial tissues, where it mediates the electrodiffusion of sodium ions from extracellular fluid through the apical membrane of cells, with water following osmotically. This is Epithelial sodium channel subunit beta-2 (scnn1b-b) from Xenopus laevis (African clawed frog).